The primary structure comprises 531 residues: Acid-sensing ion channel 3 (531 aa).

At 1-43 (MKPTSGPEEARRPASDIRVFASNCSMHGLGHVFGPGSLSLRRG) the chain is on the cytoplasmic side. A helical membrane pass occupies residues 44-61 (MWAAAVVLSVATFLYQVA). Topologically, residues 62-441 (ERVRYYREFH…SELLGDIGGQ (380 aa)) are extracellular. 7 disulfides stabilise this stretch: Cys-92/Cys-186, Cys-164/Cys-171, Cys-282/Cys-370, Cys-315/Cys-366, Cys-319/Cys-364, Cys-328/Cys-350, and Cys-330/Cys-342. An N-linked (GlcNAc...) asparagine glycan is attached at Asn-175. Residues 285–307 (ASLNPNYEPEPSDPLGSPSPSPS) are disordered. A glycan (N-linked (GlcNAc...) asparagine) is linked at Asn-398. A helical membrane pass occupies residues 442–460 (MGLFIGASLLTILEILDYL). The GAS motif; ion selectivity filter signature appears at 447–449 (GAS). Topologically, residues 461-531 (CEVFRDKVLG…HRTCYLVTQL (71 aa)) are cytoplasmic. Residues 528–531 (VTQL) carry the PDZ-binding motif.

Belongs to the amiloride-sensitive sodium channel (TC 1.A.6) family. ASIC3 subfamily. In terms of assembly, can form homotrimeric channels. Heterotrimer; forms functional heterotrimers producing channel with different properties. Forms heterotrimers with ASIC2; gives rise to a biphasic current with a sustained current which discriminates poorly between Na(+) and K(+). Interacts with STOM; inhibits ASIC3 acid-evoked current. Interacts with LIN7B (via PDZ domain); increases ASIC3 expression at the plasma membrane. Interacts with MAGI1 (via PDZ domain); probably regulates ASIC3. Interacts with GOPC (via PDZ domain); probably regulates ASIC3. Interacts with DLG4 (via PDZ domain); reduces ASIC3 expression at the plasma membrane. In terms of tissue distribution, expressed by sensory neurons. Strongly expressed in brain, spinal cord, lung, lymph nodes, kidney, pituitary, heart and testis.

The protein resides in the cell membrane. It localises to the cytoplasm. The catalysed reaction is Na(+)(in) = Na(+)(out). It catalyses the reaction K(+)(in) = K(+)(out). The enzyme catalyses Ca(2+)(in) = Ca(2+)(out). With respect to regulation, inhibited by the diuretic drug amiloride. Inhibited by the diuretic drug triamterene. Potentiated by the vertebrate neuropeptide FF (NPFF) and the related FMRFamide. Specifically and reversibly inhibited by the a sea anemone toxin APETx2. In terms of biological role, forms pH-gated heterotrimeric sodium channels that act as postsynaptic excitatory receptors in the nervous system. Upon extracellular acidification, these channels generate a biphasic current with a fast inactivating and a slow sustained phase. ASIC3 is more sensitive to protons and gates between closed, open, and desensitized states faster than other ASICs. Displays high selectivity for sodium ions but can also permit the permeation of other cations. As a neuronal acid sensor, probably contributes to mechanoreception, acid nociception, and heat nociception. By forming heterotrimeric channels with ASIC2, generates a biphasic current with a fast inactivating and a slow sustained phase, which in sensory neurons is proposed to mediate the pain induced by acidosis that occurs in ischemic, damaged or inflamed tissues. This chain is Acid-sensing ion channel 3, found in Homo sapiens (Human).